A 930-amino-acid chain; its full sequence is A disintegrin and metalloproteinase with thrombospondin motifs 5 (930 aa).

An N-terminal signal peptide occupies residues 1 to 16; it reads MLLGWASLLLCAFRLP. Residues 17-261 constitute a propeptide that is removed on maturation; the sequence is LAAVGPAATP…PQTWWRRRRR (245 aa). Disordered stretches follow at residues 24-69 and 206-231; these read ATPA…QRRR and RASC…PSGR. Positions 31–42 are enriched in low complexity; it reads AGQPPTAAAAAQ. A compositionally biased stretch (basic and acidic residues) spans 46-59; sequence RQGEEVQERAEPPG. Positions 207–214 match the Cysteine switch motif; it reads ASCETPAS. Cysteine 209 contacts Zn(2+). The 210-residue stretch at 267-476 folds into the Peptidase M12B domain; sequence RQVELLLVAD…GHGNCLLDLP (210 aa). 8 disulfides stabilise this stretch: cysteine 342/cysteine 394, cysteine 371/cysteine 376, cysteine 388/cysteine 471, cysteine 426/cysteine 455, cysteine 497/cysteine 519, cysteine 508/cysteine 529, cysteine 514/cysteine 548, and cysteine 542/cysteine 553. Histidine 410 provides a ligand contact to Zn(2+). Glutamate 411 is a catalytic residue. Zn(2+)-binding residues include histidine 414 and histidine 420. One can recognise a Disintegrin domain in the interval 485 to 566; sequence ELPGQTYDAT…TKKKYYSTSS (82 aa). Asparagine 498 carries N-linked (GlcNAc...) asparagine glycosylation. A TSP type-1 1 domain is found at 567-622; that stretch reads HGNWGSWGSWGQCSRSCGGGVQFAYRHCNNPAPRNNGRYCTGKRAIYRSCSLMPCP. C-linked (Man) tryptophan glycosylation is found at tryptophan 570 and tryptophan 573. 3 cysteine pairs are disulfide-bonded: cysteine 579–cysteine 616, cysteine 583–cysteine 621, and cysteine 594–cysteine 606. A glycan (O-linked (Fuc...) serine) is linked at serine 582. Asparagine 728, asparagine 802, and asparagine 807 each carry an N-linked (GlcNAc...) asparagine glycan. Residues 732–874 form a spacer region; that stretch reads TKIVGTFNKK…HGSNKVGSHT (143 aa). The TSP type-1 2 domain occupies 875–929; the sequence is SQPQWVTGPWLACSRTCDTGWHTRTVQCQDGNRKLAKGCPLSQRPSAFKQCLLKK.

Requires Zn(2+) as cofactor. Post-translationally, the precursor is cleaved by furin and PCSK7 outside of the cell. In terms of processing, glycosylated. Can be O-fucosylated by POFUT2 on a serine or a threonine residue found within the consensus sequence C1-X(2)-(S/T)-C2-G of the TSP type-1 repeat domains where C1 and C2 are the first and second cysteine residue of the repeat, respectively. Fucosylated repeats can then be further glycosylated by the addition of a beta-1,3-glucose residue by the glucosyltransferase, B3GALTL. Fucosylation mediates the efficient secretion of ADAMTS family members. Can also be C-glycosylated with one or two mannose molecules on tryptophan residues within the consensus sequence W-X-X-W of the TPRs, and N-glycosylated. These other glycosylations can also facilitate secretion. In terms of tissue distribution, expressed at low level in placenta primarily but also detected in heart and brain, cervix, uterus, bladder, esophagus, rib cartilage, chondroblastoma, fibrous tissue and a joint capsule from an arthritic patient.

It is found in the secreted. Its subcellular location is the extracellular space. The protein localises to the extracellular matrix. Its function is as follows. Metalloproteinase that plays an important role in connective tissue organization, development, inflammation and cell migration. Extracellular matrix (ECM) degrading enzyme that show proteolytic activity toward the hyalectan group of chondroitin sulfate proteoglycans (CSPGs) including ACAN, VCAN, BCAN and NCAN. Cleavage within the hyalectans occurs at Glu-Xaa recognition motifs. Plays a role in embryonic development, including limb and cardiac morphogenesis, and skeletal muscle development through its VCAN remodeling properties. Cleaves VCAN in the pericellular matrix surrounding myoblasts, facilitating myoblast contact and fusion which is required for skeletal muscle development and regeneration. Participates in development of brown adipose tissue and browning of white adipose tissue. Plays an important role for T-lymphocyte migration from draining lymph nodes following viral infection. This chain is A disintegrin and metalloproteinase with thrombospondin motifs 5 (ADAMTS5), found in Homo sapiens (Human).